The chain runs to 426 residues: Glutamyl-tRNA reductase (426 aa).

Substrate contacts are provided by residues 49–52 (TCNR), S109, 114–116 (EGQ), and Q120. The active-site Nucleophile is C50. Residue 189-194 (GAGKMS) participates in NADP(+) binding.

Belongs to the glutamyl-tRNA reductase family. In terms of assembly, homodimer.

The enzyme catalyses (S)-4-amino-5-oxopentanoate + tRNA(Glu) + NADP(+) = L-glutamyl-tRNA(Glu) + NADPH + H(+). Its pathway is porphyrin-containing compound metabolism; protoporphyrin-IX biosynthesis; 5-aminolevulinate from L-glutamyl-tRNA(Glu): step 1/2. It participates in porphyrin-containing compound metabolism; chlorophyll biosynthesis. In terms of biological role, catalyzes the NADPH-dependent reduction of glutamyl-tRNA(Glu) to glutamate 1-semialdehyde (GSA). This chain is Glutamyl-tRNA reductase, found in Thermosynechococcus vestitus (strain NIES-2133 / IAM M-273 / BP-1).